The chain runs to 194 residues: dCTP deaminase (194 aa).

DCTP is bound by residues 110–115, aspartate 128, 136–138, tyrosine 171, lysine 178, and glutamine 182; these read RSSLAR and VLE. The Proton donor/acceptor role is filled by glutamate 138. The interval 175–194 is disordered; it reads KDAKYKNQQSAVSSRINQDD. Positions 180 to 194 are enriched in polar residues; the sequence is KNQQSAVSSRINQDD.

It belongs to the dCTP deaminase family. Homotrimer.

It catalyses the reaction dCTP + H2O + H(+) = dUTP + NH4(+). Its pathway is pyrimidine metabolism; dUMP biosynthesis; dUMP from dCTP (dUTP route): step 1/2. Functionally, catalyzes the deamination of dCTP to dUTP. This chain is dCTP deaminase, found in Actinobacillus pleuropneumoniae serotype 5b (strain L20).